The primary structure comprises 79 residues: Pyridoxal 5'-phosphate synthase PDX1-like 4 (79 aa).

Belongs to the PdxS/SNZ family.

The sequence is that of Pyridoxal 5'-phosphate synthase PDX1-like 4 (PDX1L4) from Arabidopsis thaliana (Mouse-ear cress).